The chain runs to 508 residues: 6-phosphogluconate dehydrogenase, decarboxylating 2, chloroplastic (508 aa).

Residues 1 to 12 (MASPAPAPPAAS) constitute a chloroplast transit peptide. Residues 28 to 33 (GLATMG), 51 to 53 (NRT), 95 to 97 (VQA), and N123 each bind NADP(+). Substrate contacts are provided by residues N123 and 149-151 (SGG). The Proton acceptor role is filled by K203. Residue 206–207 (HN) coordinates substrate. Catalysis depends on E210, which acts as the Proton donor. Residues Y211, K284, R311, R475, and H481 each coordinate substrate.

This sequence belongs to the 6-phosphogluconate dehydrogenase family. In terms of assembly, homodimer.

It is found in the plastid. It localises to the chloroplast. It carries out the reaction 6-phospho-D-gluconate + NADP(+) = D-ribulose 5-phosphate + CO2 + NADPH. The protein operates within carbohydrate degradation; pentose phosphate pathway; D-ribulose 5-phosphate from D-glucose 6-phosphate (oxidative stage): step 3/3. In terms of biological role, catalyzes the oxidative decarboxylation of 6-phosphogluconate to ribulose 5-phosphate and CO(2), with concomitant reduction of NADP to NADPH. The polypeptide is 6-phosphogluconate dehydrogenase, decarboxylating 2, chloroplastic (G6PGH2) (Oryza sativa subsp. japonica (Rice)).